A 137-amino-acid polypeptide reads, in one-letter code: Oleosin Ara h 11.0101 (137 aa).

Alanine 2 is modified (N-acetylalanine; alternate). A run of 2 helical transmembrane segments spans residues 27-47 (AVVA…GTVI) and 55-75 (LFVI…LLGL).

Belongs to the oleosin family. In terms of tissue distribution, expressed in seeds (at protein level).

The protein resides in the lipid droplet. Its subcellular location is the membrane. Functionally, may have a structural role to stabilize the lipid body during desiccation of the seed by preventing coalescence of the oil. Probably interacts with both lipid and phospholipid moieties of lipid bodies. May also provide recognition signals for specific lipase anchorage in lipolysis during seedling growth. The sequence is that of Oleosin Ara h 11.0101 from Arachis hypogaea (Peanut).